The primary structure comprises 186 residues: Ribosome-recycling factor (186 aa).

This sequence belongs to the RRF family.

Its subcellular location is the cytoplasm. Functionally, responsible for the release of ribosomes from messenger RNA at the termination of protein biosynthesis. May increase the efficiency of translation by recycling ribosomes from one round of translation to another. In Cupriavidus necator (strain ATCC 17699 / DSM 428 / KCTC 22496 / NCIMB 10442 / H16 / Stanier 337) (Ralstonia eutropha), this protein is Ribosome-recycling factor.